The chain runs to 548 residues: MNYAIDKFTGTLILAARATKYAQYVCPVCKKGVNLRKGKVIPPYFAHLPGHGTSDCENFVPGNSIIIETIKTISKRYMDLRLLIPVGSNSREWSLELVLPTCNLCRAKITLDVGGRSQTLDMRSMVKSRQIGAELSVKSYRIVSYSGEPDPKFVTEVERECPGLPSEGAAVFTALGRGASKGFPRAQELRCTETFAFLWRHPVAPDFPDELEIKSLASKQGWNLALVTIPEVPSVESISWLKSFTYLPVVPARTSITAIWPFLNQKTSINHVECVHSDTILLSANMAPTSSENVGPTMYAQGSSLLLSAVGVEKSPAFFILNPGENDFVGVSGSIEQDVNLFFSFYKKNVSVPRKYPSIDLVFTKRNKEKTIVSLHQRRCIEVMMEARMFGHKLEYMSMPSGVEGVARIQRQTESSVIKLVSNDDIAAHDKSMRLLSPVALSQLSDCLANLTCHVEIDFLGLGKIFLPSSSMLSLDDGEFIELSPNLRSRILSFILQMGHTLHGFSLNNDFLLVEKLVDLQPEPHLLPHYRALVKEVKTNGFECNRFR.

The protein resides in the cytoplasm. Component of antiviral defense system Druantia type I, composed of DruA, DruB, DruC, DruD and DruE. Expression of Druantia in E.coli (strain MG1655) confers resistance to phage lambda, SECphi18, SECphi27 and T4. The sequence is that of Druantia protein DruB from Escherichia coli (strain UMEA 4076-1).